The primary structure comprises 566 residues: Proline--tRNA ligase (566 aa).

Belongs to the class-II aminoacyl-tRNA synthetase family. ProS type 1 subfamily. In terms of assembly, homodimer.

It is found in the cytoplasm. The enzyme catalyses tRNA(Pro) + L-proline + ATP = L-prolyl-tRNA(Pro) + AMP + diphosphate. Functionally, catalyzes the attachment of proline to tRNA(Pro) in a two-step reaction: proline is first activated by ATP to form Pro-AMP and then transferred to the acceptor end of tRNA(Pro). As ProRS can inadvertently accommodate and process non-cognate amino acids such as alanine and cysteine, to avoid such errors it has two additional distinct editing activities against alanine. One activity is designated as 'pretransfer' editing and involves the tRNA(Pro)-independent hydrolysis of activated Ala-AMP. The other activity is designated 'posttransfer' editing and involves deacylation of mischarged Ala-tRNA(Pro). The misacylated Cys-tRNA(Pro) is not edited by ProRS. In Bacillus cereus (strain Q1), this protein is Proline--tRNA ligase.